The primary structure comprises 343 residues: Proto-oncogene serine/threonine-protein kinase mos (343 aa).

Residues 63–339 enclose the Protein kinase domain; that stretch reads VCLMHRLGSG…LLQRDLKAFR (277 aa). Residues 69 to 77 and lysine 90 each bind ATP; that span reads LGSGGFGSV. Aspartate 198 serves as the catalytic Proton acceptor.

Belongs to the protein kinase superfamily. Ser/Thr protein kinase family. In terms of assembly, interacts with MAP2K1/MEK1.

Its subcellular location is the cytoplasm. It catalyses the reaction L-seryl-[protein] + ATP = O-phospho-L-seryl-[protein] + ADP + H(+). It carries out the reaction L-threonyl-[protein] + ATP = O-phospho-L-threonyl-[protein] + ADP + H(+). Its function is as follows. Serine/threonine kinase involved in the regulation of MAPK signaling. Is an activator of the ERK1/2 signaling cascade playing an essential role in the stimulation of oocyte maturation. The sequence is that of Proto-oncogene serine/threonine-protein kinase mos from Mus musculus (Mouse).